The sequence spans 169 residues: Cell division inhibitor SulA (169 aa).

The segment at Ala106–Tyr112 is ftsZ binding. The segment at Lys162–His169 is lon protease binding.

Belongs to the SulA family. In terms of assembly, interacts with FtsZ. Is rapidly cleaved and degraded by the Lon protease once DNA damage is repaired.

In terms of biological role, component of the SOS system and an inhibitor of cell division. Accumulation of SulA causes rapid cessation of cell division and the appearance of long, non-septate filaments. In the presence of GTP, binds a polymerization-competent form of FtsZ in a 1:1 ratio, thus inhibiting FtsZ polymerization and therefore preventing it from participating in the assembly of the Z ring. This mechanism prevents the premature segregation of damaged DNA to daughter cells during cell division. This is Cell division inhibitor SulA from Salmonella agona (strain SL483).